The chain runs to 463 residues: Exodeoxyribonuclease 7 large subunit (463 aa).

The protein belongs to the XseA family. In terms of assembly, heterooligomer composed of large and small subunits.

Its subcellular location is the cytoplasm. It carries out the reaction Exonucleolytic cleavage in either 5'- to 3'- or 3'- to 5'-direction to yield nucleoside 5'-phosphates.. Bidirectionally degrades single-stranded DNA into large acid-insoluble oligonucleotides, which are then degraded further into small acid-soluble oligonucleotides. In Bordetella bronchiseptica (strain ATCC BAA-588 / NCTC 13252 / RB50) (Alcaligenes bronchisepticus), this protein is Exodeoxyribonuclease 7 large subunit.